Reading from the N-terminus, the 344-residue chain is L-threonine 3-dehydrogenase (344 aa).

Cys42 is a Zn(2+) binding site. Residues Thr44 and His47 each act as charge relay system in the active site. Positions 67, 68, 97, 100, 103, and 111 each coordinate Zn(2+). NAD(+) contacts are provided by residues Ile179, Asp199, Arg204, 266–268, and 290–291; these read LGI and IY.

The protein belongs to the zinc-containing alcohol dehydrogenase family. In terms of assembly, homotetramer. It depends on Zn(2+) as a cofactor.

The protein localises to the cytoplasm. The catalysed reaction is L-threonine + NAD(+) = (2S)-2-amino-3-oxobutanoate + NADH + H(+). The protein operates within amino-acid degradation; L-threonine degradation via oxydo-reductase pathway; glycine from L-threonine: step 1/2. Its function is as follows. Catalyzes the NAD(+)-dependent oxidation of L-threonine to 2-amino-3-ketobutyrate. In Sinorhizobium medicae (strain WSM419) (Ensifer medicae), this protein is L-threonine 3-dehydrogenase.